The sequence spans 439 residues: Potassium/proton antiporter CemA (439 aa).

Transmembrane regions (helical) follow at residues 55–75 (IMLY…WSLL), 79–99 (ISLF…NFFN), 220–240 (YMLF…IWFL), 317–337 (LLHL…FILG), 364–384 (ILLL…EIVI), and 399–419 (IISC…KYWI).

It belongs to the CemA family.

The protein resides in the plastid. It is found in the chloroplast inner membrane. The enzyme catalyses K(+)(in) + H(+)(out) = K(+)(out) + H(+)(in). Functionally, contributes to K(+)/H(+) antiport activity by supporting proton efflux to control proton extrusion and homeostasis in chloroplasts in a light-dependent manner to modulate photosynthesis. Prevents excessive induction of non-photochemical quenching (NPQ) under continuous-light conditions. Indirectly promotes efficient inorganic carbon uptake into chloroplasts. The sequence is that of Potassium/proton antiporter CemA from Physcomitrium patens (Spreading-leaved earth moss).